The sequence spans 617 residues: ATP-dependent RNA helicase DBP1 (617 aa).

The disordered stretch occupies residues 1-90 (MADLPQKVSN…TSANYNRGGS (90 aa)). A compositionally biased stretch (polar residues) spans 7-17 (KVSNLSINNKE). Residues 38–58 (PSFERSTPKQEDKVTGGDFFR) are compositionally biased toward basic and acidic residues. Residues 79–90 (GGTSANYNRGGS) are compositionally biased toward polar residues. The Q motif motif lies at 154–182 (LDFSSPPLDELLMENIKLASFTKPTPVQK). In terms of domain architecture, Helicase ATP-binding spans 185-374 (IPIVTKGRDL…RDFLDNYIFL (190 aa)). Residue 198-205 (AQTGSGKT) coordinates ATP. The DEAD box signature appears at 318 to 321 (DEAD). The Helicase C-terminal domain maps to 385–545 (NITQRILYVD…EVPTFLSDLS (161 aa)). The interval 542–617 (SDLSRQNSRG…GYGNSNASWW (76 aa)) is disordered. The segment covering 580-594 (FGSTRPRNTGTSNWG) has biased composition (polar residues).

Belongs to the DEAD box helicase family. DDX3/DED1 subfamily.

Its subcellular location is the cytoplasm. It carries out the reaction ATP + H2O = ADP + phosphate + H(+). Functionally, ATP-binding RNA helicase involved in translation initiation. Remodels RNA in response to ADP and ATP concentrations by facilitating disruption, but also formation of RNA duplexes. Redundant to DED1, may be required in conditions in which DED1 expression is decreased. The chain is ATP-dependent RNA helicase DBP1 (DBP1) from Saccharomyces cerevisiae (strain YJM789) (Baker's yeast).